The following is a 266-amino-acid chain: Ras-like protein family member 12 (266 aa).

GTP is bound by residues 27 to 34 (GRRGAGKS), 74 to 78 (DTADL), and 134 to 137 (NKLD).

The protein belongs to the small GTPase superfamily. Ras family.

It catalyses the reaction GTP + H2O = GDP + phosphate + H(+). This Bos taurus (Bovine) protein is Ras-like protein family member 12 (RASL12).